Here is a 175-residue protein sequence, read N- to C-terminus: Nicotinamide-nucleotide adenylyltransferase 1 (175 aa).

Belongs to the archaeal NMN adenylyltransferase family.

The protein localises to the cytoplasm. The catalysed reaction is beta-nicotinamide D-ribonucleotide + ATP + H(+) = diphosphate + NAD(+). Its pathway is cofactor biosynthesis; NAD(+) biosynthesis; NAD(+) from nicotinamide D-ribonucleotide: step 1/1. The polypeptide is Nicotinamide-nucleotide adenylyltransferase 1 (Sulfolobus acidocaldarius (strain ATCC 33909 / DSM 639 / JCM 8929 / NBRC 15157 / NCIMB 11770)).